We begin with the raw amino-acid sequence, 132 residues long: Small ribosomal subunit protein uS8 (132 aa).

Belongs to the universal ribosomal protein uS8 family. As to quaternary structure, part of the 30S ribosomal subunit. Contacts proteins S5 and S12.

In terms of biological role, one of the primary rRNA binding proteins, it binds directly to 16S rRNA central domain where it helps coordinate assembly of the platform of the 30S subunit. This chain is Small ribosomal subunit protein uS8, found in Bradyrhizobium sp. (strain ORS 278).